The sequence spans 390 residues: Succinyl-diaminopimelate desuccinylase (390 aa).

His-74 provides a ligand contact to Zn(2+). The active site involves Asp-76. Asp-107 is a Zn(2+) binding site. Residue Glu-140 is the Proton acceptor of the active site. Zn(2+) is bound by residues Glu-141, Glu-169, and His-363.

The protein belongs to the peptidase M20A family. DapE subfamily. In terms of assembly, homodimer. It depends on Zn(2+) as a cofactor. Co(2+) is required as a cofactor.

The catalysed reaction is N-succinyl-(2S,6S)-2,6-diaminopimelate + H2O = (2S,6S)-2,6-diaminopimelate + succinate. The protein operates within amino-acid biosynthesis; L-lysine biosynthesis via DAP pathway; LL-2,6-diaminopimelate from (S)-tetrahydrodipicolinate (succinylase route): step 3/3. Its function is as follows. Catalyzes the hydrolysis of N-succinyl-L,L-diaminopimelic acid (SDAP), forming succinate and LL-2,6-diaminopimelate (DAP), an intermediate involved in the bacterial biosynthesis of lysine and meso-diaminopimelic acid, an essential component of bacterial cell walls. The chain is Succinyl-diaminopimelate desuccinylase from Bartonella quintana (strain Toulouse) (Rochalimaea quintana).